Reading from the N-terminus, the 377-residue chain is Succinyl-diaminopimelate desuccinylase (377 aa).

Residue His67 participates in Zn(2+) binding. The active site involves Asp69. Asp100 provides a ligand contact to Zn(2+). Catalysis depends on Glu134, which acts as the Proton acceptor. Residues Glu135, Glu163, and His349 each coordinate Zn(2+).

It belongs to the peptidase M20A family. DapE subfamily. In terms of assembly, homodimer. Zn(2+) serves as cofactor. Co(2+) is required as a cofactor.

It carries out the reaction N-succinyl-(2S,6S)-2,6-diaminopimelate + H2O = (2S,6S)-2,6-diaminopimelate + succinate. Its pathway is amino-acid biosynthesis; L-lysine biosynthesis via DAP pathway; LL-2,6-diaminopimelate from (S)-tetrahydrodipicolinate (succinylase route): step 3/3. Catalyzes the hydrolysis of N-succinyl-L,L-diaminopimelic acid (SDAP), forming succinate and LL-2,6-diaminopimelate (DAP), an intermediate involved in the bacterial biosynthesis of lysine and meso-diaminopimelic acid, an essential component of bacterial cell walls. This chain is Succinyl-diaminopimelate desuccinylase, found in Haemophilus influenzae (strain PittGG).